The following is a 297-amino-acid chain: tRNA(Ile)-lysidine synthase (297 aa).

Position 16–21 (16–21 (SGGSDS)) interacts with ATP.

The protein belongs to the tRNA(Ile)-lysidine synthase family.

The protein localises to the cytoplasm. The enzyme catalyses cytidine(34) in tRNA(Ile2) + L-lysine + ATP = lysidine(34) in tRNA(Ile2) + AMP + diphosphate + H(+). In terms of biological role, ligates lysine onto the cytidine present at position 34 of the AUA codon-specific tRNA(Ile) that contains the anticodon CAU, in an ATP-dependent manner. Cytidine is converted to lysidine, thus changing the amino acid specificity of the tRNA from methionine to isoleucine. This Mesomycoplasma hyopneumoniae (strain 232) (Mycoplasma hyopneumoniae) protein is tRNA(Ile)-lysidine synthase.